Consider the following 475-residue polypeptide: Ras-GEF domain-containing family member 1A (475 aa).

Residues 33–164 form the N-terminal Ras-GEF domain; the sequence is QDGSLVSGSL…SISQMTQNVL (132 aa). The region spanning 208 to 455 is the Ras-GEF domain; the sequence is DPLILAQQLT…FLASFENEGP (248 aa).

Functionally, guanine nucleotide exchange factor (GEF) with specificity for rap2a and other Ras family proteins (in vitro). Plays a role in cell migration. This chain is Ras-GEF domain-containing family member 1A (rasgef1a), found in Xenopus tropicalis (Western clawed frog).